A 122-amino-acid chain; its full sequence is Large ribosomal subunit protein uL14 (122 aa).

The protein belongs to the universal ribosomal protein uL14 family. In terms of assembly, part of the 50S ribosomal subunit. Forms a cluster with proteins L3 and L19. In the 70S ribosome, L14 and L19 interact and together make contacts with the 16S rRNA in bridges B5 and B8.

Functionally, binds to 23S rRNA. Forms part of two intersubunit bridges in the 70S ribosome. This is Large ribosomal subunit protein uL14 from Flavobacterium johnsoniae (strain ATCC 17061 / DSM 2064 / JCM 8514 / BCRC 14874 / CCUG 350202 / NBRC 14942 / NCIMB 11054 / UW101) (Cytophaga johnsonae).